The following is a 272-amino-acid chain: MKRSAFFISDGTGITAETLGQSLLAQFENITFNKFTRPYIDSVEKARAMVQQINNAADKDDVRPIIFDTIVNQDIREILATSNGFMIDIFSTFLAPLEQELSSHSSYSVGKSHSIGHNSNYMERIEAVNFALDNDDGARTHYYDKADIILVGVSRCGKTPTCLYMAMQFGIRAANYPLTEDDMERLQLPAALKEHRSKLFGLTIDPDRLTAIRHERKPNSRYSSYAQCEFEVREVESLFRRENIPNINSTHFSVEEISAKVLVEKGVERRFK.

152–159 contacts ADP; it reads GVSRCGKT.

It belongs to the pyruvate, phosphate/water dikinase regulatory protein family. PSRP subfamily.

The enzyme catalyses [pyruvate, water dikinase] + ADP = [pyruvate, water dikinase]-phosphate + AMP + H(+). It catalyses the reaction [pyruvate, water dikinase]-phosphate + phosphate + H(+) = [pyruvate, water dikinase] + diphosphate. In terms of biological role, bifunctional serine/threonine kinase and phosphorylase involved in the regulation of the phosphoenolpyruvate synthase (PEPS) by catalyzing its phosphorylation/dephosphorylation. The sequence is that of Putative phosphoenolpyruvate synthase regulatory protein from Pseudomonas savastanoi pv. phaseolicola (strain 1448A / Race 6) (Pseudomonas syringae pv. phaseolicola (strain 1448A / Race 6)).